Consider the following 128-residue polypeptide: Large ribosomal subunit protein bL17 (128 aa).

Belongs to the bacterial ribosomal protein bL17 family. As to quaternary structure, part of the 50S ribosomal subunit. Contacts protein L32.

This chain is Large ribosomal subunit protein bL17, found in Streptococcus uberis (strain ATCC BAA-854 / 0140J).